Consider the following 249-residue polypeptide: U1 small nuclear ribonucleoprotein usp102 (249 aa).

A disordered region spans residues M1–S25. The RRM 1 domain maps to E26 to S105. The disordered stretch occupies residues R113–V157. The segment covering E114 to K134 has biased composition (basic and acidic residues). One can recognise an RRM 2 domain in the interval K174–K247.

It belongs to the RRM U1 A/B'' family. As to quaternary structure, component of the spliceosome where it is associated with snRNP U1.

Its subcellular location is the nucleus. It localises to the nucleolus. Functionally, involved in nuclear mRNA splicing. The chain is U1 small nuclear ribonucleoprotein usp102 from Schizosaccharomyces pombe (strain 972 / ATCC 24843) (Fission yeast).